The primary structure comprises 460 residues: Probable Xaa-Pro aminopeptidase VDBG_02538 (460 aa).

Mn(2+) contacts are provided by Asp-256, Asp-267, Glu-390, and Glu-430.

The protein belongs to the peptidase M24B family. Mn(2+) serves as cofactor.

The enzyme catalyses Release of any N-terminal amino acid, including proline, that is linked to proline, even from a dipeptide or tripeptide.. Its function is as follows. Catalyzes the removal of a penultimate prolyl residue from the N-termini of peptides. The protein is Probable Xaa-Pro aminopeptidase VDBG_02538 of Verticillium alfalfae (strain VaMs.102 / ATCC MYA-4576 / FGSC 10136) (Verticillium wilt of alfalfa).